The chain runs to 256 residues: Small ribosomal subunit protein eS1 (256 aa).

Basic residues predominate over residues Met1–Lys18. Residues Met1–Val21 form a disordered region. Position 2 is an N-acetylalanine; partial (Ala2).

It belongs to the eukaryotic ribosomal protein eS1 family. As to quaternary structure, component of the small ribosomal subunit. Mature ribosomes consist of a small (40S) and a large (60S) subunit. The 40S subunit contains about 33 different proteins and 1 molecule of RNA (18S). The 60S subunit contains about 49 different proteins and 3 molecules of RNA (25S, 5.8S and 5S).

It localises to the cytoplasm. This chain is Small ribosomal subunit protein eS1 (rps1), found in Aspergillus niger (strain ATCC MYA-4892 / CBS 513.88 / FGSC A1513).